The following is a 323-amino-acid chain: Lipoyl synthase (323 aa).

Positions 61, 66, 72, 87, 91, 94, and 300 each coordinate [4Fe-4S] cluster. The Radical SAM core domain occupies 73 to 289 (WDKKHATFMI…ETVAYSKGFL (217 aa)).

It belongs to the radical SAM superfamily. Lipoyl synthase family. Requires [4Fe-4S] cluster as cofactor.

Its subcellular location is the cytoplasm. It carries out the reaction [[Fe-S] cluster scaffold protein carrying a second [4Fe-4S](2+) cluster] + N(6)-octanoyl-L-lysyl-[protein] + 2 oxidized [2Fe-2S]-[ferredoxin] + 2 S-adenosyl-L-methionine + 4 H(+) = [[Fe-S] cluster scaffold protein] + N(6)-[(R)-dihydrolipoyl]-L-lysyl-[protein] + 4 Fe(3+) + 2 hydrogen sulfide + 2 5'-deoxyadenosine + 2 L-methionine + 2 reduced [2Fe-2S]-[ferredoxin]. It functions in the pathway protein modification; protein lipoylation via endogenous pathway; protein N(6)-(lipoyl)lysine from octanoyl-[acyl-carrier-protein]: step 2/2. In terms of biological role, catalyzes the radical-mediated insertion of two sulfur atoms into the C-6 and C-8 positions of the octanoyl moiety bound to the lipoyl domains of lipoate-dependent enzymes, thereby converting the octanoylated domains into lipoylated derivatives. The sequence is that of Lipoyl synthase from Rhizobium etli (strain CIAT 652).